A 487-amino-acid chain; its full sequence is Dihydrofolate synthase/folylpolyglutamate synthase (487 aa).

44–46 (DPS) is a 7,8-dihydropteroate binding site. Residue 74–77 (GKTS) participates in ATP binding. The Mg(2+) site is built by T76 and S98. 150–153 (SKFE) serves as a coordination point for 7,8-dihydropteroate. Residue E174 coordinates Mg(2+). Residue 181–183 (WDA) coordinates 7,8-dihydropteroate. Mg(2+) contacts are provided by H201 and D203. ATP contacts are provided by residues N301, R338, and 351 to 354 (DAAH). D384 contributes to the Mg(2+) binding site.

Belongs to the folylpolyglutamate synthase family. Monomer. Mg(2+) is required as a cofactor.

It carries out the reaction 7,8-dihydropteroate + L-glutamate + ATP = 7,8-dihydrofolate + ADP + phosphate + H(+). The enzyme catalyses (6S)-5,6,7,8-tetrahydrofolyl-(gamma-L-Glu)(n) + L-glutamate + ATP = (6S)-5,6,7,8-tetrahydrofolyl-(gamma-L-Glu)(n+1) + ADP + phosphate + H(+). It functions in the pathway cofactor biosynthesis; tetrahydrofolate biosynthesis; 7,8-dihydrofolate from 2-amino-4-hydroxy-6-hydroxymethyl-7,8-dihydropteridine diphosphate and 4-aminobenzoate: step 2/2. Its pathway is cofactor biosynthesis; tetrahydrofolylpolyglutamate biosynthesis. Functionally, catalyzes the addition of a glutamate residue to dihydropteroate (7,8-dihydropteroate or H2Pte) to form dihydrofolate (7,8-dihydrofolate monoglutamate or H2Pte-Glu). Also catalyzes successive additions of L-glutamate to tetrahydrofolate, leading to folylpolyglutamate derivatives. Its function is as follows. Is involved in the bioactivation of the antituberculous drug para-aminosalicylic acid (PAS). Is able to use hydroxy-dihydropteroate (H2PtePAS) as substrate, which is the product formed by the action of DHPS (FolP1) on PAS, leading to hydroxy-dihydrofolate (H2PtePAS-Glu). This compound inhibits dihydrofolate reductase DHFR (DfrA), the next enzyme in the folate pathway, and thus disrupts the folate-dependent metabolic pathways. This is Dihydrofolate synthase/folylpolyglutamate synthase from Mycobacterium tuberculosis (strain ATCC 25618 / H37Rv).